Reading from the N-terminus, the 260-residue chain is Caveolae-associated protein 3 (260 aa).

The segment at 1–84 is interaction with CAVIN1; it reads MGESALESGP…SNTLAQLLAK (84 aa). Residues 20-78 form a leucine-zipper region; it reads VHAVTVVTLLEKLATMLETLRERQGGLAQRQGGLAGSVRRIQSNLGALSRSHDTTSNTL. 2 positions are modified to phosphoserine: S62 and S70. A Glycyl lysine isopeptide (Lys-Gly) (interchain with G-Cter in SUMO2) cross-link involves residue K128. The interaction with CAV1 stretch occupies residues 135-201; that stretch reads AKAFQKAPEP…SGRKGHAAPT (67 aa). A disordered region spans residues 140-260; that stretch reads KAPEPLGPVE…AAVLQVESAA (121 aa). The span at 157-168 shows a compositional bias: acidic residues; it reads AEAEESSDEEEP. A phosphoserine mark is found at S162, S163, and S171. Over residues 201-210 the composition is skewed to pro residues; sequence TPTPVKPPRL.

Belongs to the CAVIN family. Component of the CAVIN complex composed of CAVIN1, CAVIN2, CAVIN3 and CAVIN4. Interacts with PRKCD and with phosphatidylserine. Phosphatidylserine may form a bridge between PKC and PKC-binding partners and stabilize the binding. Interacts with PER2. Interacts with CAVIN1 and EPS15L1. Interacts (via leucine-zipper domain) with CAV1 in a cholesterol-sensitive manner. Post-translationally, in vitro, phosphorylated by PRKCD.

Its subcellular location is the cytoplasm. It is found in the membrane. The protein resides in the caveola. It localises to the cytosol. Functionally, regulates the traffic and/or budding of caveolae. Plays a role in caveola formation in a tissue-specific manner. Required for the formation of caveolae in smooth muscle but not in the lung and heart endothelial cells. Regulates the equilibrium between cell surface-associated and cell surface-dissociated caveolae by promoting the rapid release of caveolae from the cell surface. Plays a role in the regulation of the circadian clock. Modulates the period length and phase of circadian gene expression and also regulates expression and interaction of the core clock components PER1/2 and CRY1/2. In Bos taurus (Bovine), this protein is Caveolae-associated protein 3 (CAVIN3).